A 333-amino-acid polypeptide reads, in one-letter code: Ketol-acid reductoisomerase (NADP(+)) (333 aa).

Residues 1–171 (MSNDTQPTIA…GGARANIIKT (171 aa)) form the KARI N-terminal Rossmann domain. NADP(+) contacts are provided by residues 14-17 (YGSQ), Arg37, Thr42, and 72-75 (DMVQ). The active site involves His97. Gly123 contacts NADP(+). In terms of domain architecture, KARI C-terminal knotted spans 172–317 (TFKEETETDL…KKLRAKMVWL (146 aa)). The Mg(2+) site is built by Asp180, Glu184, Glu216, and Glu220. Residue Ser241 participates in substrate binding.

The protein belongs to the ketol-acid reductoisomerase family. It depends on Mg(2+) as a cofactor.

The enzyme catalyses (2R)-2,3-dihydroxy-3-methylbutanoate + NADP(+) = (2S)-2-acetolactate + NADPH + H(+). The catalysed reaction is (2R,3R)-2,3-dihydroxy-3-methylpentanoate + NADP(+) = (S)-2-ethyl-2-hydroxy-3-oxobutanoate + NADPH + H(+). It functions in the pathway amino-acid biosynthesis; L-isoleucine biosynthesis; L-isoleucine from 2-oxobutanoate: step 2/4. It participates in amino-acid biosynthesis; L-valine biosynthesis; L-valine from pyruvate: step 2/4. In terms of biological role, involved in the biosynthesis of branched-chain amino acids (BCAA). Catalyzes an alkyl-migration followed by a ketol-acid reduction of (S)-2-acetolactate (S2AL) to yield (R)-2,3-dihydroxy-isovalerate. In the isomerase reaction, S2AL is rearranged via a Mg-dependent methyl migration to produce 3-hydroxy-3-methyl-2-ketobutyrate (HMKB). In the reductase reaction, this 2-ketoacid undergoes a metal-dependent reduction by NADPH to yield (R)-2,3-dihydroxy-isovalerate. In Xanthomonas campestris pv. campestris (strain 8004), this protein is Ketol-acid reductoisomerase (NADP(+)).